A 164-amino-acid chain; its full sequence is 2S seed storage protein 1 (164 aa).

A signal peptide spans 1 to 21 (MANKLFLVCAALALCFLLTNA). 3 consecutive propeptides follow at residues 22-37 (SIYRTVVEFEEDDATN), 74-83 (EFDFEDDMEN), and 163-164 (FY).

Belongs to the 2S seed storage albumins family. As to quaternary structure, the mature protein consists of a small and a large chain linked by disulfide bonds.

Its function is as follows. This is a 2S seed storage protein. The protein is 2S seed storage protein 1 (AT2S1) of Arabidopsis thaliana (Mouse-ear cress).